The sequence spans 496 residues: Probable CtpA-like serine protease (496 aa).

A compositionally biased stretch (basic and acidic residues) spans 1 to 16 (MDDKQHTSSSDDERAE). Residues 1-27 (MDDKQHTSSSDDERAEIATSNQDQETN) are disordered. Polar residues predominate over residues 18 to 27 (ATSNQDQETN). The chain crosses the membrane as a helical span at residues 39 to 59 (FISILIGTILITAVITVVAYI). Residues 124 to 206 (TKSFNEGVSG…TEVTLTVQRG (83 aa)) form the PDZ domain. Catalysis depends on charge relay system residues Ser329, Asp340, and Lys354.

Belongs to the peptidase S41A family.

It is found in the cell membrane. This chain is Probable CtpA-like serine protease, found in Staphylococcus aureus (strain MSSA476).